The primary structure comprises 115 residues: Mediator of RNA polymerase II transcription subunit 9 (115 aa).

The disordered stretch occupies residues 1–31 (MATGGTVRPAEEPEEEEEEEDEAVEEEEEED). Residues 12-31 (EPEEEEEEEDEAVEEEEEED) are compositionally biased toward acidic residues. Residues 31 to 107 (DYTFLPLVHD…SELLQKYKSL (77 aa)) are a coiled coil.

The protein belongs to the Mediator complex subunit 9 family. As to quaternary structure, component of the Mediator complex.

The protein localises to the nucleus. Component of the Mediator complex, a coactivator involved in the regulated transcription of nearly all RNA polymerase II-dependent genes. Mediator functions as a bridge to convey information from gene-specific regulatory proteins to the basal RNA polymerase II transcription machinery. Mediator is recruited to promoters by direct interactions with regulatory proteins and serves as a scaffold for the assembly of a functional preinitiation complex with RNA polymerase II and the general transcription factors. The protein is Mediator of RNA polymerase II transcription subunit 9 (med9) of Xenopus laevis (African clawed frog).